We begin with the raw amino-acid sequence, 434 residues long: Beta-enolase (434 aa).

N-acetylserine is present on S2. Positions 158 and 167 each coordinate substrate. E210 serves as the catalytic Proton donor. Mg(2+) is bound by residues D245, E293, and D318. Residues E293 and D318 each coordinate substrate. The active-site Proton acceptor is K343. Substrate-binding positions include 370–373 and K394; that span reads SHRS.

It belongs to the enolase family. As to quaternary structure, homodimer. Interacts with PNKD. The cofactor is Mg(2+).

Its subcellular location is the cytoplasm. It catalyses the reaction (2R)-2-phosphoglycerate = phosphoenolpyruvate + H2O. Its pathway is carbohydrate degradation; glycolysis; pyruvate from D-glyceraldehyde 3-phosphate: step 4/5. In terms of biological role, glycolytic enzyme that catalyzes the conversion of 2-phosphoglycerate to phosphoenolpyruvate. This chain is Beta-enolase (ENO3), found in Gallus gallus (Chicken).